Here is a 627-residue protein sequence, read N- to C-terminus: Nuclear receptor subfamily 4 group A member 3 (627 aa).

Residues 1-112 (MPCVQAQYSP…HHHHHHHHHQ (112 aa)) form an activation function (AF)-1 domain region. The segment at 1–139 (MPCVQAQYSP…PSTSMYFKQS (139 aa)) is required for DNA-PK heterotrimer. The tract at residues 1–292 (MPCVQAQYSP…NRSSSSGEGT (292 aa)) is interaction with NCOA1, NCOA2, NCOA3 and KAT2B. Disordered regions lie at residues 96–162 (HGYH…DELP) and 268–289 (ASSLLGESPSLPSPPNRSSSSG). Positions 97 to 112 (GYHHHHHHHHHHHHHQ) are enriched in basic residues. Residues 141–150 (PSTPTTPGFP) are compositionally biased toward pro residues. Low complexity predominate over residues 269-288 (SSLLGESPSLPSPPNRSSSS). Positions 290–365 (EGTCAVCGDN…VGMVKEVVRT (76 aa)) form a DNA-binding region, nuclear receptor. 2 consecutive NR C4-type zinc fingers follow at residues 293–313 (CAVCGDNAACQHYGVRTCEGC) and 329–353 (CLANKNCPVDKRRRNRCQYCRFQKC). The segment at 365 to 395 (TDSLKGRRGRLPSKPKSPLQQEPSQPSPPSP) is disordered. Over residues 378–388 (KPKSPLQQEPS) the composition is skewed to low complexity. The interval 380–627 (KSPLQQEPSQ…DKLFLDTLPF (248 aa)) is interaction with KAT2B. An NR LBD domain is found at 395–624 (PPICMMNALV…SVIDKLFLDT (230 aa)).

It belongs to the nuclear hormone receptor family. NR4 subfamily. In terms of assembly, interacts with SIX3 (via homeobox); differentially regulates the transcriptional activities of NR4A3. Interacts with NCOA2; potentiates the activity of the NR4A3. Interacts with NCOA1, NCOA3, MED1 and KAT2B. Interacts with EP300 and NCOA2; mediates the recruitment of MED1 in the coactivator complex. Interacts with the constituents of DNA-PK heterotrimer PRKDC, XRCC6 and XRCC5; phosphorylates and prevents NR4A3 ubiquitinylation and degradation. Interacts with NR3C1 (via nuclear receptor DNA-binding domain); the interactions represses transcription activity of NR4A3 on the POMC promoter Nur response element (NurRE). Interacts with TRIM28; the interactions potentiates NR4A3 activity on NurRE promoter. Binds DNA as a monomer and homodimer. Interacts with PARP1; activates PARP1 by improving acetylation of PARP1 and suppressing the interaction between PARP1 and SIRT1. Post-translationally, phosphorylated by PRKDC. In terms of tissue distribution, ubiquitous. Highest levels of expression in brain. Widely expressed throughout the arcuate nucleus region of the hypothalamus, namely in AgRP neurons.

Its subcellular location is the nucleus. Transcriptional activator that binds to regulatory elements in promoter regions in a cell- and response element (target)-specific manner. Induces gene expression by binding as monomers to the NR4A1 response element (NBRE) 5'-AAAAGGTCA-3' site and as homodimers to the Nur response element (NurRE) site in the promoter of their regulated target genes. Plays a role in the regulation of proliferation, survival and differentiation of many different cell types and also in metabolism and inflammation. Mediates proliferation of vascular smooth muscle, myeloid progenitor cell and type B pancreatic cells; promotes mitogen-induced vascular smooth muscle cell proliferation through transactivation of SKP2 promoter by binding a NBRE site. Upon PDGF stimulation, stimulates vascular smooth muscle cell proliferation by regulating CCND1 and CCND2 expression. In islets, induces type B pancreatic cell proliferation through up-regulation of genes that activate cell cycle, as well as genes that cause degradation of the CDKN1A. Negatively regulates myeloid progenitor cell proliferation by repressing RUNX1 in a NBRE site-independent manner. During inner ear, plays a role as a key mediator of the proliferative growth phase of semicircular canal development. Also mediates survival of neuron and smooth muscle cells; mediates CREB-induced neuronal survival, and during hippocampus development, plays a critical role in pyramidal cell survival and axonal guidance. Is required for S phase entry of the cell cycle and survival of smooth muscle cells by inducing CCND1, resulting in RB1 phosphorylation. Binds to NBRE motif in CCND1 promoter, resulting in the activation of the promoter and CCND1 transcription. Also plays a role in inflammation; upon TNF stimulation, mediates monocyte adhesion by inducing the expression of VCAM1 and ICAM1 by binding to the NBRE consensus site. In mast cells activated by Fc-epsilon receptor cross-linking, promotes the synthesis and release of cytokines but impairs events leading to degranulation. Also plays a role in metabolism; by modulating feeding behavior; and by playing a role in energy balance by inhibiting the glucocorticoid-induced orexigenic neuropeptides AGRP expression, at least in part by forming a complex with activated NR3C1 on the AGRP- glucocorticoid response element (GRE), and thus weakening the DNA binding activity of NR3C1. Upon catecholamines stimulation, regulates gene expression that controls oxidative metabolism in skeletal muscle. Plays a role in glucose transport by regulating translocation of the SLC2A4 glucose transporter to the cell surface. Finally, during gastrulation plays a crucial role in the formation of anterior mesoderm by controlling cell migration. Inhibits adipogenesis. Also participates in cardiac hypertrophy by activating PARP1. The protein is Nuclear receptor subfamily 4 group A member 3 (Nr4a3) of Mus musculus (Mouse).